We begin with the raw amino-acid sequence, 458 residues long: Adenylosuccinate synthetase (458 aa).

GTP contacts are provided by residues 17–23 (GDEGKGK) and 45–47 (GHT). D18 (proton acceptor) is an active-site residue. Residues D18 and G45 each coordinate Mg(2+). Residues 18–21 (DEGK), 43–46 (NAGH), T137, R151, Q247, T262, and R330 each bind IMP. The Proton donor role is filled by H46. Substrate is bound at residue 326 to 332 (VTTGRSR). GTP is bound by residues R332, 358-360 (KLD), and 440-442 (STS).

It belongs to the adenylosuccinate synthetase family. Homodimer. It depends on Mg(2+) as a cofactor.

The protein localises to the cytoplasm. The enzyme catalyses IMP + L-aspartate + GTP = N(6)-(1,2-dicarboxyethyl)-AMP + GDP + phosphate + 2 H(+). The protein operates within purine metabolism; AMP biosynthesis via de novo pathway; AMP from IMP: step 1/2. Functionally, plays an important role in the de novo pathway of purine nucleotide biosynthesis. Catalyzes the first committed step in the biosynthesis of AMP from IMP. This Delftia acidovorans (strain DSM 14801 / SPH-1) protein is Adenylosuccinate synthetase.